The primary structure comprises 469 residues: MNPNQKIITIGSVSLTIATVCFLMQIAILVTTVTLHFRQYECDSPANNQVMPCEPTIIERNITEIVYLNNTTIEKEICPKLVEYRNWSKPQCKITGFAPFSKDNSIRLSAGGDIWVTREPYVSCDPGKCYQFALGQGTTLDNKHSNDTIHDRIPHRTLLMNELGVPFHLGTRQVCIAWSSSSCHDGKAWLHVCVTGDDKNATASFIYDGRLVDSIGSWSQNILRTQESECVCINGTCTVVMTDGSASGRADTRILFIEEGKIVHISPLSGSAQHVEECSCYPRYPGVRCICRDNWKGSNRPVVDINVEDYSIDSSYVCSGLVGDTPRNNDRSSNSNCRNPNNERGNHGVKGWAFDDGNDVWMGRTISKDLRSGYETFKVIGGWSTPNSKSQINRQVIVDSDNRSGYSGIFSVEGKSCINRCFYVELIRGREQETRVWWTSNSIVVFCGTSGTYGTGSWPDGADINLMPI.

The Intravirion portion of the chain corresponds to 1-9; that stretch reads MNPNQKIIT. A helical transmembrane segment spans residues 10–30; it reads IGSVSLTIATVCFLMQIAILV. Residues 11 to 33 are involved in apical transport and lipid raft association; that stretch reads GSVSLTIATVCFLMQIAILVTTV. The Virion surface portion of the chain corresponds to 31-469; the sequence is TTVTLHFRQY…DGADINLMPI (439 aa). The hypervariable stalk region stretch occupies residues 36-88; it reads HFRQYECDSPANNQVMPCEPTIIERNITEIVYLNNTTIEKEICPKLVEYRNWS. N-linked (GlcNAc...) asparagine; by host glycosylation is found at Asn61, Asn69, Asn70, and Asn86. A head of neuraminidase region spans residues 91-469; it reads QCKITGFAPF…DGADINLMPI (379 aa). 8 disulfides stabilise this stretch: Cys92–Cys417, Cys124–Cys129, Cys183–Cys230, Cys232–Cys237, Cys278–Cys291, Cys280–Cys289, Cys318–Cys337, and Cys421–Cys447. Residue Arg118 participates in substrate binding. Asn146 is a glycosylation site (N-linked (GlcNAc...) asparagine; by host). Catalysis depends on Asp151, which acts as the Proton donor/acceptor. Arg152 contributes to the substrate binding site. Asn200 and Asn234 each carry an N-linked (GlcNAc...) asparagine; by host glycan. A substrate-binding site is contributed by 276–277; sequence EE. Arg292 contributes to the substrate binding site. Ca(2+) is bound by residues Asp293, Gly297, and Asp324. Positions 323 to 350 are disordered; the sequence is GDTPRNNDRSSNSNCRNPNNERGNHGVK. A compositionally biased stretch (low complexity) spans 331–343; that stretch reads RSSNSNCRNPNNE. Residue Arg371 coordinates substrate. N-linked (GlcNAc...) asparagine; by host glycosylation occurs at Asn402. Tyr406 serves as the catalytic Nucleophile.

Belongs to the glycosyl hydrolase 34 family. In terms of assembly, homotetramer. Ca(2+) serves as cofactor. N-glycosylated.

Its subcellular location is the virion membrane. It is found in the host apical cell membrane. The catalysed reaction is Hydrolysis of alpha-(2-&gt;3)-, alpha-(2-&gt;6)-, alpha-(2-&gt;8)- glycosidic linkages of terminal sialic acid residues in oligosaccharides, glycoproteins, glycolipids, colominic acid and synthetic substrates.. Inhibited by the neuraminidase inhibitors zanamivir (Relenza) and oseltamivir (Tamiflu). These drugs interfere with the release of progeny virus from infected cells and are effective against all influenza strains. Resistance to neuraminidase inhibitors is quite rare. In terms of biological role, catalyzes the removal of terminal sialic acid residues from viral and cellular glycoconjugates. Cleaves off the terminal sialic acids on the glycosylated HA during virus budding to facilitate virus release. Additionally helps virus spread through the circulation by further removing sialic acids from the cell surface. These cleavages prevent self-aggregation and ensure the efficient spread of the progeny virus from cell to cell. Otherwise, infection would be limited to one round of replication. Described as a receptor-destroying enzyme because it cleaves a terminal sialic acid from the cellular receptors. May facilitate viral invasion of the upper airways by cleaving the sialic acid moieties on the mucin of the airway epithelial cells. Likely to plays a role in the budding process through its association with lipid rafts during intracellular transport. May additionally display a raft-association independent effect on budding. Plays a role in the determination of host range restriction on replication and virulence. Sialidase activity in late endosome/lysosome traffic seems to enhance virus replication. In Aves (Human), this protein is Neuraminidase.